The following is a 308-amino-acid chain: Prephenate dehydratase (308 aa).

The 185-residue stretch at 3–187 folds into the Prephenate dehydratase domain; it reads RITYLGPEGT…AHTRFVLVGR (185 aa). Positions 201 to 278 constitute an ACT domain; sequence SVVLGLGNVP…EDVRYLGSWP (78 aa).

As to quaternary structure, homodimer.

It carries out the reaction prephenate + H(+) = 3-phenylpyruvate + CO2 + H2O. It functions in the pathway amino-acid biosynthesis; L-phenylalanine biosynthesis; phenylpyruvate from prephenate: step 1/1. The protein is Prephenate dehydratase (pheA) of Mycobacteroides abscessus (strain ATCC 19977 / DSM 44196 / CCUG 20993 / CIP 104536 / JCM 13569 / NCTC 13031 / TMC 1543 / L948) (Mycobacterium abscessus).